We begin with the raw amino-acid sequence, 330 residues long: Ubiquinone biosynthesis protein COQ4, mitochondrial (330 aa).

A mitochondrion-targeting transit peptide spans 1 to 31; sequence MLQSTKVTKSVLTNVLRVEQRRGFLLSGAAV. Zn(2+)-binding residues include His-212, Asp-213, His-216, and Glu-228.

This sequence belongs to the COQ4 family. As to quaternary structure, component of a multi-subunit COQ enzyme complex, composed of at least COQ3, COQ4, COQ5, COQ6, COQ7 and COQ9. Zn(2+) is required as a cofactor.

The protein resides in the mitochondrion inner membrane. It carries out the reaction a 4-hydroxy-3-methoxy-5-(all-trans-polyprenyl)benzoate + H(+) = a 2-methoxy-6-(all-trans-polyprenyl)phenol + CO2. Its pathway is cofactor biosynthesis; ubiquinone biosynthesis. Lyase that catalyzes the C1-decarboxylation of 4-hydroxy-3-methoxy-5-(all-trans-polyprenyl)benzoic acid into 2-methoxy-6-(all-trans-polyprenyl)phenol during ubiquinone biosynthesis. This chain is Ubiquinone biosynthesis protein COQ4, mitochondrial, found in Candida glabrata (strain ATCC 2001 / BCRC 20586 / JCM 3761 / NBRC 0622 / NRRL Y-65 / CBS 138) (Yeast).